A 222-amino-acid polypeptide reads, in one-letter code: 23kDa protein (222 aa).

Over residues 1-12 the composition is skewed to polar residues; it reads MEPHDQSGSTTR. Residues 1 to 21 are disordered; the sequence is MEPHDQSGSTTRQLDEIRDRR.

In terms of biological role, may act as a regulatory factor during viral transcription. This is 23kDa protein from Indian citrus ringspot virus (isolate Kinnow mandarin/India/K1/1996) (ICRSV).